The following is a 110-amino-acid chain: U1-lycotoxin-Ls1kk (110 aa).

The N-terminal stretch at Met-1 to Ala-20 is a signal peptide. The propeptide occupies Glu-21 to Arg-44. Cystine bridges form between Cys-47–Cys-62, Cys-54–Cys-71, Cys-61–Cys-89, and Cys-73–Cys-87.

Belongs to the neurotoxin 19 (CSTX) family. 03 subfamily. As to expression, expressed by the venom gland.

It is found in the secreted. The protein is U1-lycotoxin-Ls1kk of Lycosa singoriensis (Wolf spider).